Consider the following 1039-residue polypeptide: Alpha-mannosidase 2C1 (1039 aa).

Residues His-259, Asp-261, Asp-371, and His-576 each contribute to the Co(2+) site. Residue Asp-371 is the Nucleophile of the active site.

This sequence belongs to the glycosyl hydrolase 38 family. Co(2+) is required as a cofactor. In terms of tissue distribution, expressed in kidney and liver (at protein level). Widely expressed, with highest levels in lung, ovary and testis. Also detected at lower levels in heart, brain, liver, spleen, kidney and thymus.

The protein resides in the cytoplasm. It carries out the reaction Hydrolysis of terminal, non-reducing alpha-D-mannose residues in alpha-D-mannosides.. Its activity is regulated as follows. Inhibited by 1,4-dideoxy-1,4-imino-d-mannitol (DIM) and EDTA. In terms of biological role, cleaves alpha 1,2-, alpha 1,3-, and alpha 1,6-linked mannose residues from glycoproteins. Involved in the degradation of free oligosaccharides in the cytoplasm. The sequence is that of Alpha-mannosidase 2C1 from Mus musculus (Mouse).